Reading from the N-terminus, the 574-residue chain is Septation ring formation regulator EzrA (574 aa).

Residues 1-7 are Extracellular-facing; sequence MSSGIIL. A helical membrane pass occupies residues 8-26; the sequence is LIVAIVLLVIIAYLVGVII. The Cytoplasmic segment spans residues 27–574; sequence RKRNDSLITS…YEKTREHIRF (548 aa). Coiled-coil stretches lie at residues 102-141, 274-350, and 459-520; these read NFIR…EEKN, ELVT…ETES, and QLEA…SFEA.

It belongs to the EzrA family.

It is found in the cell membrane. Its function is as follows. Negative regulator of FtsZ ring formation; modulates the frequency and position of FtsZ ring formation. Inhibits FtsZ ring formation at polar sites. Interacts either with FtsZ or with one of its binding partners to promote depolymerization. The sequence is that of Septation ring formation regulator EzrA from Streptococcus pyogenes serotype M1.